Consider the following 163-residue polypeptide: Small ribosomal subunit protein eS10A (163 aa).

Positions 92-163 are disordered; sequence LTQTTRSNAV…GFGRASRYDN (72 aa). The span at 105-116 shows a compositional bias: gly residues; sequence GGPGGPGGGFGG.

The protein belongs to the eukaryotic ribosomal protein eS10 family.

The protein localises to the cytoplasm. In Drosophila melanogaster (Fruit fly), this protein is Small ribosomal subunit protein eS10A (RpS10a).